The sequence spans 450 residues: 23S rRNA (uracil(1939)-C(5))-methyltransferase RlmD (450 aa).

In terms of domain architecture, TRAM spans 12–70; that stretch reads SKQLSAKLSLNVDQLDHLGAGIAQYQGKVVFIPGALPDETVTVQLTEQKKNYARAKLIK. [4Fe-4S] cluster-binding residues include cysteine 83, cysteine 89, cysteine 92, and cysteine 171. Positions 283, 312, 317, 333, 360, and 380 each coordinate S-adenosyl-L-methionine. Cysteine 406 acts as the Nucleophile in catalysis.

Belongs to the class I-like SAM-binding methyltransferase superfamily. RNA M5U methyltransferase family. RlmD subfamily.

It catalyses the reaction uridine(1939) in 23S rRNA + S-adenosyl-L-methionine = 5-methyluridine(1939) in 23S rRNA + S-adenosyl-L-homocysteine + H(+). In terms of biological role, catalyzes the formation of 5-methyl-uridine at position 1939 (m5U1939) in 23S rRNA. The sequence is that of 23S rRNA (uracil(1939)-C(5))-methyltransferase RlmD from Shewanella putrefaciens (strain CN-32 / ATCC BAA-453).